We begin with the raw amino-acid sequence, 477 residues long: ATP synthase subunit beta (477 aa).

An ATP-binding site is contributed by 163 to 170 (GGAGVGKT).

Belongs to the ATPase alpha/beta chains family. In terms of assembly, F-type ATPases have 2 components, CF(1) - the catalytic core - and CF(0) - the membrane proton channel. CF(1) has five subunits: alpha(3), beta(3), gamma(1), delta(1), epsilon(1). CF(0) has four main subunits: a(1), b(1), b'(1) and c(9-12).

The protein localises to the cellular thylakoid membrane. The enzyme catalyses ATP + H2O + 4 H(+)(in) = ADP + phosphate + 5 H(+)(out). Produces ATP from ADP in the presence of a proton gradient across the membrane. The catalytic sites are hosted primarily by the beta subunits. The protein is ATP synthase subunit beta of Synechococcus sp. (strain JA-2-3B'a(2-13)) (Cyanobacteria bacterium Yellowstone B-Prime).